A 1365-amino-acid polypeptide reads, in one-letter code: Killer toxin-resistance protein 5 (1365 aa).

A signal peptide spans 1–17 (MRLLALVLLLLCAPLRA). 11 N-linked (GlcNAc...) asparagine glycosylation sites follow: Asn-115, Asn-228, Asn-293, Asn-457, Asn-519, Asn-523, Asn-644, Asn-870, Asn-1091, Asn-1150, and Asn-1195. The segment at 1334 to 1365 (FASSPGDEDVPGESVSSKYQDSDNAAPLHDEL) is disordered. Positions 1347–1356 (SVSSKYQDSD) are enriched in polar residues. Residues 1362-1365 (HDEL) carry the Prevents secretion from ER motif.

To D.melanogaster UGGG.

The protein resides in the endoplasmic reticulum lumen. Required for (1-&gt;6)-beta-D-glucan synthesis and normal cell growth. In Saccharomyces cerevisiae (strain ATCC 204508 / S288c) (Baker's yeast), this protein is Killer toxin-resistance protein 5 (KRE5).